We begin with the raw amino-acid sequence, 290 residues long: Type II restriction enzyme MjaIII (290 aa).

This sequence belongs to the DpnII type II restriction endonuclease family.

The catalysed reaction is Endonucleolytic cleavage of DNA to give specific double-stranded fragments with terminal 5'-phosphates.. Its function is as follows. A P subtype restriction enzyme that recognizes the double-stranded sequence 5'-GATC-3'; the cleavage site is unknown. The chain is Type II restriction enzyme MjaIII (mjaIIIR) from Methanocaldococcus jannaschii (strain ATCC 43067 / DSM 2661 / JAL-1 / JCM 10045 / NBRC 100440) (Methanococcus jannaschii).